We begin with the raw amino-acid sequence, 474 residues long: PTS system N-acetylmuramic acid-specific EIIBC component (474 aa).

Residues 1 to 89 (MAKEISSELL…SELLGEAPVQ (89 aa)) enclose the PTS EIIB type-1 domain. Residues 1–123 (MAKEISSELL…LAKFATIFTP (123 aa)) are Cytoplasmic-facing. Catalysis depends on cysteine 29, which acts as the Phosphocysteine intermediate; for EIIB activity. One can recognise a PTS EIIC type-1 domain in the interval 115-474 (AKFATIFTPL…LFGCRNVNLD (360 aa)). The chain crosses the membrane as a helical span at residues 124–144 (LIPGFIAAGLLLGIATLIATV). Residues 145–157 (MHVPADAQGTLPD) lie on the Periplasmic side of the membrane. Residues 158 to 178 (ALNFMKVFSKGLFTFLVILVG) form a helical membrane-spanning segment. The Cytoplasmic portion of the chain corresponds to 179–180 (YN). Residues 181–201 (AAQAFGGTGVNGAIIAALFLL) form a helical membrane-spanning segment. The Periplasmic segment spans residues 202-217 (GYNPAATTGYYAGFHD). Residues 218 to 238 (FFGLPIDPRGNIIGVLIAAWA) form a helical membrane-spanning segment. The Cytoplasmic segment spans residues 239 to 260 (CARIEGMVRRFMPDDLDMLLTS). A helical transmembrane segment spans residues 261-281 (LITLLITATLAYLIIMPLGGW). The Periplasmic portion of the chain corresponds to 282-301 (LFEGMSWLFMHLNSNPLGCA). Residues 302–322 (VLAGLFLIAVVFGVHQGFIPV) form a helical membrane-spanning segment. The Cytoplasmic portion of the chain corresponds to 323–334 (YLALMDSQGFNS). The chain crosses the membrane as a helical span at residues 335-355 (LFPILSMAGAGQVGAALALYW). At 356 to 368 (RAQPHSGLRSQVR) the chain is on the periplasmic side. A helical transmembrane segment spans residues 369–389 (GAIIPGLLGVGEPLIYGVTLP). Residues 390-393 (RMKP) lie on the Cytoplasmic side of the membrane. A helical transmembrane segment spans residues 394–414 (FITACLGGAAGGLFIGLIAWW). The Periplasmic portion of the chain corresponds to 415-440 (GLPMGLNSAFGPSGLVALPLMTSAQG). The helical transmembrane segment at 441–461 (ILPAMAIYAGGILVAWVCGFI) threads the bilayer. Over 462–474 (FTTLFGCRNVNLD) the chain is Cytoplasmic.

The protein localises to the cell inner membrane. It catalyses the reaction N-acetyl-beta-D-muramate(out) + N(pros)-phospho-L-histidyl-[protein] = N-acetyl-beta-D-muramate 6-phosphate(in) + L-histidyl-[protein]. In terms of biological role, the phosphoenolpyruvate-dependent sugar phosphotransferase system (sugar PTS), a major carbohydrate active transport system, catalyzes the phosphorylation of incoming sugar substrates concomitantly with their translocation across the cell membrane. This system is involved in N-acetylmuramic acid (MurNAc) transport, yielding cytoplasmic MurNAc-6-P. Is also able to take up anhydro-N-acetylmuramic acid (anhMurNAc), but cannot phosphorylate the carbon 6, probably because of the 1,6-anhydro ring. This Shigella dysenteriae serotype 1 (strain Sd197) protein is PTS system N-acetylmuramic acid-specific EIIBC component (murP).